Consider the following 430-residue polypeptide: Leucoanthocyanidin dioxygenase (430 aa).

Residues leucine 212–proline 311 enclose the Fe2OG dioxygenase domain. Residues histidine 236, aspartate 238, and histidine 292 each coordinate Fe cation. Basic and acidic residues-rich tracts occupy residues lysine 376–glycine 407 and lysine 415–lysine 430. The disordered stretch occupies residues lysine 376–lysine 430.

It belongs to the iron/ascorbate-dependent oxidoreductase family. The cofactor is Fe cation. L-ascorbate is required as a cofactor. In terms of tissue distribution, predominantly expressed in corollas and at lower levels in anthers.

It catalyses the reaction a (2R,3S,4S)-leucoanthocyanidin + 2-oxoglutarate + O2 = a 4-H-anthocyanidin with a 3-hydroxy group + succinate + CO2 + 2 H2O. It functions in the pathway pigment biosynthesis; anthocyanin biosynthesis. Functionally, oxidation of leucoanthocyanidins into anthocyanidins. The protein is Leucoanthocyanidin dioxygenase (ANT17) of Petunia hybrida (Petunia).